The sequence spans 1142 residues: Protein kinase C-like (1142 aa).

In terms of domain architecture, REM-1 1 spans 1–67 (MNDEDKVHDI…LRELQMRRLG (67 aa)). A disordered region spans residues 70–139 (VDNMSLGASP…PPDSNVPRAR (70 aa)). Positions 149-226 (KFDTPHLGPR…LKRYEELHID (78 aa)) constitute an REM-1 2 domain. The 119-residue stretch at 231-349 (GPDDDSINLP…LRRKKIEAEM (119 aa)) folds into the C2 domain. Residues 357–403 (ADRVGSRAPPPQFPMGAQSPQFAAPPTSPGSQEQNTMIPPQAPPPSQ) are disordered. A compositionally biased stretch (polar residues) spans 385-394 (PGSQEQNTMI). Phorbol-ester/DAG-type zinc fingers lie at residues 457 to 505 (GHKF…VTKC) and 525 to 576 (PHRF…PDFC). 2 disordered regions span residues 592-622 (TQKK…SGSI) and 651-807 (SQTT…TDPG). Over residues 613–622 (SKTSISSGSI) the composition is skewed to polar residues. Low complexity-rich tracts occupy residues 663–677 (TSTS…AAAA), 712–724 (SAQQ…SPQQ), and 741–765 (PQAR…MYQQ). The Protein kinase domain occupies 817 to 1076 (FNFLAVLGKG…AQEIMSQPFF (260 aa)). Residues 823-831 (LGKGNFGKV) and K846 contribute to the ATP site. D942 acts as the Proton acceptor in catalysis. The AGC-kinase C-terminal domain maps to 1077–1142 (RNINWDDIYH…RGFSYTADFE (66 aa)).

It belongs to the protein kinase superfamily. AGC Ser/Thr protein kinase family. PKC subfamily.

The enzyme catalyses L-seryl-[protein] + ATP = O-phospho-L-seryl-[protein] + ADP + H(+). It catalyses the reaction L-threonyl-[protein] + ATP = O-phospho-L-threonyl-[protein] + ADP + H(+). The sequence is that of Protein kinase C-like from Neurospora crassa (strain ATCC 24698 / 74-OR23-1A / CBS 708.71 / DSM 1257 / FGSC 987).